Reading from the N-terminus, the 87-residue chain is U3-theraphotoxin-Hhn1g (87 aa).

Residues Met1–Ala24 form the signal peptide. A propeptide spanning residues Ser25–Arg52 is cleaved from the precursor. Cystine bridges form between Cys54/Cys67, Cys61/Cys72, and Cys66/Cys79.

This sequence belongs to the neurotoxin 10 (Hwtx-1) family. 51 (Hntx-8) subfamily. Hntx-8 sub-subfamily. In terms of tissue distribution, expressed by the venom gland.

It localises to the secreted. Ion channel inhibitor. This chain is U3-theraphotoxin-Hhn1g, found in Cyriopagopus hainanus (Chinese bird spider).